Reading from the N-terminus, the 321-residue chain is Lipoyl synthase (321 aa).

[4Fe-4S] cluster contacts are provided by cysteine 68, cysteine 73, cysteine 79, cysteine 94, cysteine 98, cysteine 101, and serine 308. Residues 80–297 (FNHGTATFMI…KAEAMAMGFT (218 aa)) form the Radical SAM core domain.

Belongs to the radical SAM superfamily. Lipoyl synthase family. [4Fe-4S] cluster serves as cofactor.

Its subcellular location is the cytoplasm. It carries out the reaction [[Fe-S] cluster scaffold protein carrying a second [4Fe-4S](2+) cluster] + N(6)-octanoyl-L-lysyl-[protein] + 2 oxidized [2Fe-2S]-[ferredoxin] + 2 S-adenosyl-L-methionine + 4 H(+) = [[Fe-S] cluster scaffold protein] + N(6)-[(R)-dihydrolipoyl]-L-lysyl-[protein] + 4 Fe(3+) + 2 hydrogen sulfide + 2 5'-deoxyadenosine + 2 L-methionine + 2 reduced [2Fe-2S]-[ferredoxin]. It functions in the pathway protein modification; protein lipoylation via endogenous pathway; protein N(6)-(lipoyl)lysine from octanoyl-[acyl-carrier-protein]: step 2/2. Catalyzes the radical-mediated insertion of two sulfur atoms into the C-6 and C-8 positions of the octanoyl moiety bound to the lipoyl domains of lipoate-dependent enzymes, thereby converting the octanoylated domains into lipoylated derivatives. This is Lipoyl synthase from Yersinia pseudotuberculosis serotype O:1b (strain IP 31758).